Here is a 147-residue protein sequence, read N- to C-terminus: Neocarzinostatin (147 aa).

The signal sequence occupies residues 1–34 (MVPISIIRNRVAKVAVGSAAVLGLAVGFQTPAVA). 2 cysteine pairs are disulfide-bonded: C71/C81 and C122/C127.

It belongs to the neocarzinostatin family.

NCS has antibiotic activity (for Gram-positive bacteria) and antitumor activity (for certain mouse tumors). NCS binds non-covalently to a chromophore which is the cytotoxic and mutagenic component of the antibiotic. The chromophore binds to DNA as a weak intercalator and causes single- and double-strand breaks. This is Neocarzinostatin (ncsA) from Streptomyces carzinostaticus.